Here is a 471-residue protein sequence, read N- to C-terminus: Glutamate--tRNA ligase (471 aa).

The 'HIGH' region signature appears at Pro-9–Gly-19. 4 residues coordinate Zn(2+): Cys-98, Cys-100, Cys-125, and His-127. The short motif at Lys-237–Arg-241 is the 'KMSKS' region element. Lys-240 contacts ATP.

This sequence belongs to the class-I aminoacyl-tRNA synthetase family. Glutamate--tRNA ligase type 1 subfamily. In terms of assembly, monomer. Requires Zn(2+) as cofactor.

The protein localises to the cytoplasm. It carries out the reaction tRNA(Glu) + L-glutamate + ATP = L-glutamyl-tRNA(Glu) + AMP + diphosphate. Catalyzes the attachment of glutamate to tRNA(Glu) in a two-step reaction: glutamate is first activated by ATP to form Glu-AMP and then transferred to the acceptor end of tRNA(Glu). The polypeptide is Glutamate--tRNA ligase (Escherichia coli O9:H4 (strain HS)).